A 431-amino-acid chain; its full sequence is Histidinol dehydrogenase (431 aa).

Tyr131, Gln193, and Asn216 together coordinate NAD(+). The substrate site is built by Ser239, Gln261, and His264. The Zn(2+) site is built by Gln261 and His264. Catalysis depends on proton acceptor residues Glu329 and His330. Substrate is bound by residues His330, Asp363, Glu417, and His422. A Zn(2+)-binding site is contributed by Asp363. His422 contributes to the Zn(2+) binding site.

This sequence belongs to the histidinol dehydrogenase family. Zn(2+) is required as a cofactor.

The catalysed reaction is L-histidinol + 2 NAD(+) + H2O = L-histidine + 2 NADH + 3 H(+). It functions in the pathway amino-acid biosynthesis; L-histidine biosynthesis; L-histidine from 5-phospho-alpha-D-ribose 1-diphosphate: step 9/9. Catalyzes the sequential NAD-dependent oxidations of L-histidinol to L-histidinaldehyde and then to L-histidine. The protein is Histidinol dehydrogenase of Clostridium acetobutylicum (strain ATCC 824 / DSM 792 / JCM 1419 / IAM 19013 / LMG 5710 / NBRC 13948 / NRRL B-527 / VKM B-1787 / 2291 / W).